The primary structure comprises 284 residues: Polyamine aminopropyltransferase (284 aa).

Positions 6–242 (KGWFTEVCKE…GWWSATLAGH (237 aa)) constitute a PABS domain. Glutamine 36 contacts S-methyl-5'-thioadenosine. The spermidine site is built by histidine 67 and aspartate 91. Residues glutamate 111 and 142-143 (DG) contribute to the S-methyl-5'-thioadenosine site. The active-site Proton acceptor is the aspartate 161. Residue 161–164 (DSTD) participates in spermidine binding.

This sequence belongs to the spermidine/spermine synthase family. In terms of assembly, homodimer or homotetramer.

It localises to the cytoplasm. The catalysed reaction is S-adenosyl 3-(methylsulfanyl)propylamine + putrescine = S-methyl-5'-thioadenosine + spermidine + H(+). It functions in the pathway amine and polyamine biosynthesis; spermidine biosynthesis; spermidine from putrescine: step 1/1. Functionally, catalyzes the irreversible transfer of a propylamine group from the amino donor S-adenosylmethioninamine (decarboxy-AdoMet) to putrescine (1,4-diaminobutane) to yield spermidine. This is Polyamine aminopropyltransferase from Nitrosococcus oceani (strain ATCC 19707 / BCRC 17464 / JCM 30415 / NCIMB 11848 / C-107).